The chain runs to 117 residues: Big defensin (117 aa).

The signal sequence occupies residues 1–23 (MEKKTAYCLLFLVLLVPYTALGA). The propeptide occupies 24-33 (VLKRAPAKKE). Cystine bridges form between cysteine 82–cysteine 112, cysteine 89–cysteine 107, and cysteine 93–cysteine 113.

Belongs to the big defensin family.

The protein localises to the secreted. Significantly inhibits the growth of Gram-negative and Gram-positive bacteria and fungi in vitro. This Branchiostoma belcheri (Amphioxus) protein is Big defensin.